We begin with the raw amino-acid sequence, 839 residues long: Protein translocase subunit SecA (839 aa).

ATP contacts are provided by residues Gln86, 104–108, and Asp493; that span reads GEGKT. A disordered region spans residues 794-839; it reads GIDMDNLQTSGPSDRPDPETSGDADPKNRAQRRAQEQERKRQNKKQ. Over residues 807–833 the composition is skewed to basic and acidic residues; it reads DRPDPETSGDADPKNRAQRRAQEQERK.

Belongs to the SecA family. In terms of assembly, monomer and homodimer. Part of the essential Sec protein translocation apparatus which comprises SecA, SecYEG and auxiliary proteins SecDF. Other proteins may also be involved.

It localises to the cell membrane. The protein localises to the cytoplasm. It carries out the reaction ATP + H2O + cellular proteinSide 1 = ADP + phosphate + cellular proteinSide 2.. Functionally, part of the Sec protein translocase complex. Interacts with the SecYEG preprotein conducting channel. Has a central role in coupling the hydrolysis of ATP to the transfer of proteins into and across the cell membrane, serving as an ATP-driven molecular motor driving the stepwise translocation of polypeptide chains across the membrane. The polypeptide is Protein translocase subunit SecA (Brevibacillus brevis (strain 47 / JCM 6285 / NBRC 100599)).